A 246-amino-acid polypeptide reads, in one-letter code: CTD nuclear envelope phosphatase 1 homolog (246 aa).

Residues 3–23 (TIAQSVFCFLAGFFNFFLLYF) traverse the membrane as a helical segment. In terms of domain architecture, FCP1 homology spans 53 to 220 (LTVKRKILVL…LNLLPFLDAL (168 aa)).

It belongs to the dullard family.

The protein resides in the membrane. Its subcellular location is the nucleus envelope. The catalysed reaction is O-phospho-L-seryl-[protein] + H2O = L-seryl-[protein] + phosphate. It catalyses the reaction O-phospho-L-threonyl-[protein] + H2O = L-threonyl-[protein] + phosphate. In terms of biological role, serine/threonine protein phosphatase that may dephosphorylate and activate lipin-like phosphatases. Lipins are phosphatidate phosphatases that catalyze the conversion of phosphatidic acid to diacylglycerol and control the metabolism of fatty acids at different levels. May indirectly modulate the lipid composition of nuclear and/or endoplasmic reticulum membranes and be required for proper nuclear membrane morphology and/or dynamics. Contributes to closure of nuclear envelope (NE) holes and prevents excess nuclear membranes after meiosis and mitosis, possibly through spatial regulation of lipin. May limit the production of endoplasmic reticulum (ER) sheets proximal to the NE to prevent the ER membranes that feed into NE openings from invading the nuclear interior and thereby restrict nuclear transport to nuclear pore complexes (NPCs). May also indirectly regulate the production of lipid droplets and triacylglycerol. This is CTD nuclear envelope phosphatase 1 homolog (cnep-1) from Caenorhabditis elegans.